A 436-amino-acid chain; its full sequence is 5-hydroxytryptamine receptor 6 (436 aa).

Residues M1 to G27 lie on the Extracellular side of the membrane. N9 carries an N-linked (GlcNAc...) asparagine glycan. A helical membrane pass occupies residues W28–C52. Residues T53–N62 lie on the Cytoplasmic side of the membrane. A helical membrane pass occupies residues F63–L88. Topologically, residues Y89–R96 are extracellular. The helical transmembrane segment at G97–L122 threads the bilayer. Cysteines 99 and 180 form a disulfide. D106 is a serotonin binding site. Residues D123 to R142 lie on the Cytoplasmic side of the membrane. Residues A143–H167 traverse the membrane as a helical segment. The Extracellular portion of the chain corresponds to E168–S185. The chain crosses the membrane as a helical span at residues L186 to C209. Over R210–A266 the chain is Cytoplasmic. Residues S267 to V293 traverse the membrane as a helical segment. Position 288 (N288) interacts with serotonin. Residues C294–P299 are Extracellular-facing. The chain crosses the membrane as a helical span at residues G300–F323. Topologically, residues M324 to P436 are cytoplasmic.

Belongs to the G-protein coupled receptor 1 family. In terms of assembly, interacts with MTOR, RPTOR and NF1. Interacts with CDK5. Localized exclusively in the central nervous system, predominantly in the corpus striatum but also in various limbic and cortical regions.

It is found in the cell membrane. In terms of biological role, G-protein coupled receptor for 5-hydroxytryptamine (serotonin), a biogenic hormone that functions as a neurotransmitter, a hormone and a mitogen. Also has a high affinity for tricyclic psychotropic drugs. Ligand binding causes a conformation change that triggers signaling via guanine nucleotide-binding proteins (G proteins) and modulates the activity of downstream effectors. HTR6 is coupled to G(s) G alpha proteins and mediates activation of adenylate cyclase activity. Controls pyramidal neurons migration during corticogenesis, through the regulation of CDK5 activity. Is an activator of mTOR signaling. The sequence is that of 5-hydroxytryptamine receptor 6 (Htr6) from Rattus norvegicus (Rat).